The primary structure comprises 246 residues: MAGHSKWKNIQRRKNAQDAKRGKLFMKLAKEIYVAAKSGGGDPASNPSLRLVIEKAKAANMPSENIERAIKKATGTQEHTNYEEIRYEGYGPGGVAVMVVCLTDNKNRTAANVRAAFAKNGGNLGETGCVSYLFERKGLLVIDREQHNVDEDELLLLAIEAGAEEMETTDESFEIYTAPESFETVKDELEQQGFTFASAEITMIPQTYTTLEGDDLKKMLKLIDTLEDDDDVQEVYHNLDESVLEE.

It belongs to the TACO1 family.

The protein resides in the cytoplasm. The protein is Probable transcriptional regulatory protein GK2594 of Geobacillus kaustophilus (strain HTA426).